Reading from the N-terminus, the 199-residue chain is GTP cyclohydrolase-2 (199 aa).

50-54 contacts GTP; sequence RIHSE. Residues cysteine 55, cysteine 66, and cysteine 68 each coordinate Zn(2+). Residues glutamine 71, 93 to 95, and threonine 115 contribute to the GTP site; that span reads EGR. Aspartate 127 functions as the Proton acceptor in the catalytic mechanism. Arginine 129 (nucleophile) is an active-site residue. 2 residues coordinate GTP: threonine 150 and lysine 155.

It belongs to the GTP cyclohydrolase II family. As to quaternary structure, homodimer. The cofactor is Zn(2+).

It carries out the reaction GTP + 4 H2O = 2,5-diamino-6-hydroxy-4-(5-phosphoribosylamino)-pyrimidine + formate + 2 phosphate + 3 H(+). It participates in cofactor biosynthesis; riboflavin biosynthesis; 5-amino-6-(D-ribitylamino)uracil from GTP: step 1/4. Catalyzes the conversion of GTP to 2,5-diamino-6-ribosylamino-4(3H)-pyrimidinone 5'-phosphate (DARP), formate and pyrophosphate. This is GTP cyclohydrolase-2 from Buchnera aphidicola subsp. Baizongia pistaciae (strain Bp).